The sequence spans 103 residues: UPF0235 protein Dole_0289 (103 aa).

This sequence belongs to the UPF0235 family.

In Desulfosudis oleivorans (strain DSM 6200 / JCM 39069 / Hxd3) (Desulfococcus oleovorans), this protein is UPF0235 protein Dole_0289.